Reading from the N-terminus, the 110-residue chain is UPF0122 protein Aflv_1766 (110 aa).

It belongs to the UPF0122 family.

Its function is as follows. Might take part in the signal recognition particle (SRP) pathway. This is inferred from the conservation of its genetic proximity to ftsY/ffh. May be a regulatory protein. In Anoxybacillus flavithermus (strain DSM 21510 / WK1), this protein is UPF0122 protein Aflv_1766.